A 470-amino-acid chain; its full sequence is 3-isopropylmalate dehydratase large subunit (470 aa).

The span at 294–307 (PDQNTGISGSTPNP) shows a compositional bias: polar residues. The disordered stretch occupies residues 294-313 (PDQNTGISGSTPNPSDAADD). [4Fe-4S] cluster is bound by residues cysteine 347, cysteine 407, and cysteine 410.

This sequence belongs to the aconitase/IPM isomerase family. LeuC type 1 subfamily. In terms of assembly, heterodimer of LeuC and LeuD. Requires [4Fe-4S] cluster as cofactor.

The catalysed reaction is (2R,3S)-3-isopropylmalate = (2S)-2-isopropylmalate. Its pathway is amino-acid biosynthesis; L-leucine biosynthesis; L-leucine from 3-methyl-2-oxobutanoate: step 2/4. In terms of biological role, catalyzes the isomerization between 2-isopropylmalate and 3-isopropylmalate, via the formation of 2-isopropylmaleate. This Akkermansia muciniphila (strain ATCC BAA-835 / DSM 22959 / JCM 33894 / BCRC 81048 / CCUG 64013 / CIP 107961 / Muc) protein is 3-isopropylmalate dehydratase large subunit.